A 164-amino-acid chain; its full sequence is NADH-quinone oxidoreductase subunit I (164 aa).

2 4Fe-4S ferredoxin-type domains span residues 55–85 and 95–124; these read LRRY…IDAE and TRYD…EGPN. [4Fe-4S] cluster is bound by residues Cys-65, Cys-68, Cys-71, Cys-75, Cys-104, Cys-107, Cys-110, and Cys-114.

It belongs to the complex I 23 kDa subunit family. In terms of assembly, NDH-1 is composed of 14 different subunits. Subunits NuoA, H, J, K, L, M, N constitute the membrane sector of the complex. [4Fe-4S] cluster serves as cofactor.

The protein resides in the cell inner membrane. It catalyses the reaction a quinone + NADH + 5 H(+)(in) = a quinol + NAD(+) + 4 H(+)(out). NDH-1 shuttles electrons from NADH, via FMN and iron-sulfur (Fe-S) centers, to quinones in the respiratory chain. The immediate electron acceptor for the enzyme in this species is believed to be ubiquinone. Couples the redox reaction to proton translocation (for every two electrons transferred, four hydrogen ions are translocated across the cytoplasmic membrane), and thus conserves the redox energy in a proton gradient. The protein is NADH-quinone oxidoreductase subunit I of Ruegeria pomeroyi (strain ATCC 700808 / DSM 15171 / DSS-3) (Silicibacter pomeroyi).